A 184-amino-acid polypeptide reads, in one-letter code: Probable RNA 2'-phosphotransferase (184 aa).

It belongs to the KptA/TPT1 family.

Its function is as follows. Removes the 2'-phosphate from RNA via an intermediate in which the phosphate is ADP-ribosylated by NAD followed by a presumed transesterification to release the RNA and generate ADP-ribose 1''-2''-cyclic phosphate (APPR&gt;P). May function as an ADP-ribosylase. The polypeptide is Probable RNA 2'-phosphotransferase (Escherichia coli O9:H4 (strain HS)).